The primary structure comprises 104 residues: Cuticle protein 67, isoform B (104 aa).

A run of 7 repeats spans residues 7–10 (AAPA), 14–17 (AAPA), 21–24 (AAPA), 28–31 (AAPA), 85–88 (AAPA), 92–95 (AAPA), and 98–101 (AAPA).

In terms of biological role, component of the cuticle of migratory locust which contains more than 100 different structural proteins. The chain is Cuticle protein 67, isoform B from Locusta migratoria (Migratory locust).